Reading from the N-terminus, the 68-residue chain is Large ribosomal subunit protein bL32 (68 aa).

Residues 1–21 (MAVQQNKVSKSRRNNRRAHDS) form a disordered region.

The protein belongs to the bacterial ribosomal protein bL32 family.

This Roseobacter denitrificans (strain ATCC 33942 / OCh 114) (Erythrobacter sp. (strain OCh 114)) protein is Large ribosomal subunit protein bL32.